The sequence spans 442 residues: UDP-N-acetylmuramoylalanine--D-glutamate ligase (442 aa).

115–121 (GSNGKST) provides a ligand contact to ATP.

It belongs to the MurCDEF family.

Its subcellular location is the cytoplasm. The catalysed reaction is UDP-N-acetyl-alpha-D-muramoyl-L-alanine + D-glutamate + ATP = UDP-N-acetyl-alpha-D-muramoyl-L-alanyl-D-glutamate + ADP + phosphate + H(+). Its pathway is cell wall biogenesis; peptidoglycan biosynthesis. Its function is as follows. Cell wall formation. Catalyzes the addition of glutamate to the nucleotide precursor UDP-N-acetylmuramoyl-L-alanine (UMA). This chain is UDP-N-acetylmuramoylalanine--D-glutamate ligase, found in Vibrio vulnificus (strain YJ016).